Here is a 204-residue protein sequence, read N- to C-terminus: MTFKGFSKKDFKTMQIPGLEARMSGIQTDIQPKFRAVGEELTTYLSAKLGDEMFLHIARHQRRSVNPPESTWLAICHDKRGYKKHPHFQVGLFDNYLFIWLAFIYENEESKKIANRFLKEKKLLADLPDSFAISPDHTEEKTYPVHDGQLKATLERFRDVKKGEFLVGKIYLPDDSHLSPGKDFIKEAEMVLDELIPLYKASLQ.

This sequence belongs to the UPF0637 family.

The polypeptide is UPF0637 protein LMHCC_1566 (Listeria monocytogenes serotype 4a (strain HCC23)).